The chain runs to 963 residues: Kinesin-1 heavy chain (963 aa).

Residue Ala2 is modified to N-acetylalanine. Residues 8 to 325 (NIKVMCRFRP…LLFGQRAKTI (318 aa)) form the Kinesin motor domain. ATP is bound at residue 85-92 (GQTSSGKT). Lys213 participates in a covalent cross-link: Glycyl lysine isopeptide (Lys-Gly) (interchain with G-Cter in SUMO2). Residues 330-913 (CVNVELTAEQ…EAVRSKNMAR (584 aa)) adopt a coiled-coil conformation. The tract at residues 908 to 963 (SKNMARRGHSAQIAKPIRPGQHPAASPTHPGAVRGGGSFVQNNQPVGLRGGGGKQA) is disordered. The segment at 915-963 (GHSAQIAKPIRPGQHPAASPTHPGAVRGGGSFVQNNQPVGLRGGGGKQA) is globular. Phosphoserine is present on residues Ser933 and Ser945. Arg956 carries the post-translational modification Omega-N-methylarginine.

Belongs to the TRAFAC class myosin-kinesin ATPase superfamily. Kinesin family. Kinesin subfamily. As to quaternary structure, oligomer composed of two heavy chains and two light chains. Interacts with GRIP1 and PPP1R42. Interacts with SYBU. Interacts with JAKMIP1. Interacts with PLEKHM2. Interacts with ECPAS. Interacts with ZFYVE27. Found in a complex with OGT, RHOT1, RHOT2 and TRAK1. Interacts with APP (via cytoplasmic domain). In terms of tissue distribution, expressed in the brain (at protein level). Expressed in the brain, liver, kidney, spleen, heart, lung and sciatic nerve.

The protein resides in the cytoplasm. The protein localises to the cytoskeleton. Its subcellular location is the cytolytic granule membrane. It localises to the lysosome membrane. Microtubule-dependent motor required for normal distribution of mitochondria and lysosomes. Can induce formation of neurite-like membrane protrusions in non-neuronal cells in a ZFYVE27-dependent manner. Regulates centrosome and nuclear positioning during mitotic entry. During the G2 phase of the cell cycle in a BICD2-dependent manner, antagonizes dynein function and drives the separation of nuclei and centrosomes. Required for anterograde axonal transportation of MAPK8IP3/JIP3 which is essential for MAPK8IP3/JIP3 function in axon elongation. Through binding with PLEKHM2 and ARL8B, directs lysosome movement toward microtubule plus ends. Involved in NK cell-mediated cytotoxicity. Drives the polarization of cytolytic granules and microtubule-organizing centers (MTOCs) toward the immune synapse between effector NK lymphocytes and target cells. This chain is Kinesin-1 heavy chain, found in Rattus norvegicus (Rat).